Reading from the N-terminus, the 291-residue chain is Prepilin leader peptidase/N-methyltransferase (291 aa).

A helical transmembrane segment spans residues 14–34; it reads LYFSLVFLFSLMIGSFLNVVI. 4 residues coordinate Zn(2+): cysteine 75, cysteine 78, cysteine 100, and cysteine 103. Transmembrane regions (helical) follow at residues 107-127, 131-151, 162-182, 186-206, 232-252, and 262-282; these read ISAR…VVAM, PGWG…LTFI, LTLP…YVPL, VIGA…FKLL, LPIV…GLIL, and IPFG…GDSI.

This sequence belongs to the peptidase A24 family. Requires Zn(2+) as cofactor.

It localises to the cell inner membrane. The catalysed reaction is Typically cleaves a -Gly-|-Phe- bond to release an N-terminal, basic peptide of 5-8 residues from type IV prepilin, and then N-methylates the new N-terminal amino group, the methyl donor being S-adenosyl-L-methionine.. Functionally, plays an essential role in type IV pili and type II pseudopili formation by proteolytically removing the leader sequence from substrate proteins and subsequently monomethylating the alpha-amino group of the newly exposed N-terminal phenylalanine. In Aeromonas salmonicida (strain A449), this protein is Prepilin leader peptidase/N-methyltransferase (tapD).